The following is a 1840-amino-acid chain: Neurexin 1 (1840 aa).

Residues 1-50 (MKAPHSATYQDNYADAAMTARTRPSMDMDQQRNRNQAELRLLPAQRTSTS) are disordered. Over 1–1696 (MKAPHSATYQ…NSIEEERTAM (1696 aa)) the chain is Extracellular. Positions 24-37 (PSMDMDQQRNRNQA) are enriched in basic and acidic residues. A Laminin G-like 1 domain is found at 104–289 (GFQLDGSQNS…RDIKCGDVPC (186 aa)). The region spanning 309–347 (TTDACERNDPCQHGGICISTDSGPICECRNLEYDGQYCE) is the EGF-like 1 domain. 8 disulfides stabilise this stretch: Cys-313–Cys-325, Cys-319–Cys-334, Cys-336–Cys-346, Cys-511–Cys-547, Cys-710–Cys-739, Cys-746–Cys-757, Cys-751–Cys-766, and Cys-768–Cys-778. 2 consecutive Laminin G-like domains span residues 352–547 (PSEA…EYQC) and 554–739 (DPVT…KPSC). The region spanning 742–779 (QANVCNGNPCLNGGTCLEGWNRPICDCSATLYGGPTCG) is the EGF-like 2 domain. 2 Laminin G-like domains span residues 784 to 964 (TLAF…LPSA) and 982 to 1158 (HAAT…VSGC). Disulfide bonds link Cys-1130-Cys-1158, Cys-1164-Cys-1175, Cys-1169-Cys-1184, and Cys-1186-Cys-1196. The EGF-like 3 domain occupies 1160–1197 (GPTKCSQNACANRGNCVQQWNAYACECDMTSYTGPTCY). Residues 1201–1416 (IAYEFGNNKG…LIFSGAGSGC (216 aa)) enclose the Laminin G-like 6 domain. The disordered stretch occupies residues 1411 to 1651 (GAGSGCRGDD…DEHHPLPPLP (241 aa)). Positions 1447–1472 (QTTTSQQGNSLSTGGSSSGGVITNGT) are enriched in low complexity. Polar residues predominate over residues 1491–1527 (TTEQFTSTSTARGSESNNEMVTITTTGRSDVTTEQHQ). The span at 1528 to 1600 (GSSSSSSSGS…TTTTTTTTQA (73 aa)) shows a compositional bias: low complexity. A compositionally biased stretch (basic and acidic residues) spans 1632–1646 (RNDHDRMQLPDEHHP). Residues 1697–1717 (IIGIVAGILIAVVLVILLVLW) form a helical membrane-spanning segment. Residues 1718-1840 (LKSNGDRGYK…DSKDVKEWYV (123 aa)) lie on the Cytoplasmic side of the membrane. The interval 1737–1840 (GSHNPNAALL…DSKDVKEWYV (104 aa)) is disordered. The segment covering 1747–1757 (GNTSTNGSYHQ) has biased composition (polar residues). A compositionally biased stretch (low complexity) spans 1774–1787 (QQQHHAQQQMHNGH). A compositionally biased stretch (gly residues) spans 1788–1813 (NGNGNGGGGGGGGMMSSGSGSLGYGS). Zn(2+)-binding residues include Asp-1831 and Asp-1834. Basic and acidic residues predominate over residues 1831–1840 (DSKDVKEWYV). The PDZ domain binding signature appears at 1837 to 1840 (EWYV).

This sequence belongs to the neurexin family. As to quaternary structure, interacts (via C-terminal PDZ binding motif) with CASK (via PDZ domain). Interacts (via cytoplasmic domain) with apolpp/ApoLI; the interaction supports apolpp/ApoLI protein stability. Interact (via cytoplasmic domain) with Spn/Spinophilin. Interacts with RhoGAP100F/Syd-1 (via PDZ domain); RhoGAP100F/Syd-1 may recruit Nrx-1 to the presynaptic active zone. As to expression, expressed in brain, with expression in medulla, lamina, lobula, lobula plate, mushroom body and antennal lobe, and in retina (at protein level). Expressed in rabdomere of photoreceptor cells (at protein level).

It is found in the synaptic cell membrane. It localises to the presynaptic cell membrane. The protein resides in the postsynaptic cell membrane. In terms of biological role, neuronal cell adhesion protein involved in synapse formation, development of synaptic active zones, synaptic regulation and visual function. Plays a role in cell adhesion between the pre- and the postsynaptic cell. Required for proper proliferation of synaptic boutons during larval development, a process necessary for coordinated matching of pre-and postsynaptic compartments. Promotes presynaptic active zone formation and neurotransmitter release. Spn/Spinophilin fine-tunes nrx-1/nlg1 signaling at the pre-synapse to control active zone number and functionality and thereby optimizing action potential-induced exocytosis. Required for synapse formation in central nervous system. By regulating synapse formation, may play a role in larval associative learning. Together with RhoGAP100F/syd-1, controls synapse formation at the neuromuscular junction. Essential for synaptic vesicle cycling, which plays critical roles in neurotransmission at neuromuscular junctions (NMJ). Regulated and restricts formation of glutamate receptor clusters. Mediates retinoid transport and subsequent rhodopsin maturation and may regulate lipoprotein function; thereby playing a role in vision. Regulates sleep, circadian rhythm and synaptic plasticity. Together with CASK, required for locomotion. The polypeptide is Neurexin 1 (Drosophila melanogaster (Fruit fly)).